The sequence spans 265 residues: Glutamate racemase (265 aa).

Residues 12–13 (DS) and 44–45 (YG) contribute to the substrate site. The active-site Proton donor/acceptor is Cys-75. 76–77 (NT) contributes to the substrate binding site. Cys-186 serves as the catalytic Proton donor/acceptor. 187 to 188 (TH) is a substrate binding site.

It belongs to the aspartate/glutamate racemases family.

It catalyses the reaction L-glutamate = D-glutamate. It participates in cell wall biogenesis; peptidoglycan biosynthesis. Provides the (R)-glutamate required for cell wall biosynthesis. This is Glutamate racemase from Pseudomonas putida (strain GB-1).